A 148-amino-acid chain; its full sequence is Endoribonuclease YbeY (148 aa).

Zn(2+) contacts are provided by His-113, His-117, and His-123.

This sequence belongs to the endoribonuclease YbeY family. Zn(2+) is required as a cofactor.

The protein localises to the cytoplasm. In terms of biological role, single strand-specific metallo-endoribonuclease involved in late-stage 70S ribosome quality control and in maturation of the 3' terminus of the 16S rRNA. This Borrelia turicatae (strain 91E135) protein is Endoribonuclease YbeY.